The chain runs to 279 residues: uncharacterized protein (279 aa).

Low complexity-rich tracts occupy residues 1–25 (MNEN…NNNN), 86–151 (PSQS…NGNN), and 232–250 (NKNN…DDNN). 3 disordered regions span residues 1–27 (MNEN…NNIK), 83–153 (NLFP…NNID), and 213–260 (QSVN…KVKS).

This is an uncharacterized protein from Dictyostelium discoideum (Social amoeba).